We begin with the raw amino-acid sequence, 137 residues long: Large ribosomal subunit protein uL16c (137 aa).

Residues M1–A21 are disordered.

This sequence belongs to the universal ribosomal protein uL16 family. Part of the 50S ribosomal subunit.

The protein resides in the plastid. The protein localises to the chloroplast. The sequence is that of Large ribosomal subunit protein uL16c from Tupiella akineta (Green alga).